The chain runs to 81 residues: RNA-binding protein Hfq (81 aa).

Positions 11 to 71 (DIFLNSARKN…VSTITPLRPI (61 aa)) constitute a Sm domain.

It belongs to the Hfq family. In terms of assembly, homohexamer.

Its function is as follows. RNA chaperone that binds small regulatory RNA (sRNAs) and mRNAs to facilitate mRNA translational regulation in response to envelope stress, environmental stress and changes in metabolite concentrations. Also binds with high specificity to tRNAs. This Clostridium acetobutylicum (strain ATCC 824 / DSM 792 / JCM 1419 / IAM 19013 / LMG 5710 / NBRC 13948 / NRRL B-527 / VKM B-1787 / 2291 / W) protein is RNA-binding protein Hfq.